The following is a 631-amino-acid chain: MSQTNSHAQAGGTAKPIGLLIAAVGVVYGDIGTSPLYTLKEVFQGGYGVEVTHDAILGVLSLIFWSLIWVVSFKYMAFVLRADNQGEGGIMALMALARRASAKHPKLQMMMVVFGLFGAALFYGDSMITPAVSVLSAMEGLELAFDGLDHWIVPMALVVLVGLFLIQRHGTARIGVLFGPVMVVWFLVLGALGVYGIMQSPEVLKAVNPAWGLNFFIIHPGIGVAILGAVVLALTGAEALYADMGHFGRKPISRAWFILVLPALLLNYFGQGALVLGNPETVRNPFYLLAPSWALLPLIGLSTMATIIASQAVISGAFSMTLQAIQLGYIPRMHIQHTSSDAQGQIYIGAVNWALMVGVIMLVIGFESSGALASAYGVAVTGTMLCTTILVSTVMLMLWKWPPLLAVPLLICLLLVDGLFFAANVPKIFQGGAFPVLAGAVLFILMTTWKRGKHLLAERIDEGGLPLPIFIGSIRVQPPHRVQGTAVFLTARSDAVPHALLHNMLHNQVLHEQVVLLTVVYEDTPRVPSAQRFEVESYGEGFYRVILHFGFIDEPDVPAALALCHLAELDFSPMRTTYFLSRETVIPSKMDGMARWREALFAFMLKNANGNLRFFKLPFNRVIELGTQVEM.

12 consecutive transmembrane segments (helical) span residues 17–37, 56–76, 109–129, 147–167, 174–194, 215–235, 256–276, 288–308, 346–366, 378–398, 403–423, and 428–448; these read IGLL…SPLY, ILGV…FKYM, MMMV…SMIT, GLDH…FLIQ, IGVL…ALGV, FFII…LALT, WFIL…ALVL, LLAP…ATII, IYIG…VIGF, VAVT…MLML, PLLA…FFAA, and IFQG…LMTT.

It belongs to the HAK/KUP transporter (TC 2.A.72) family.

The protein localises to the cell inner membrane. The enzyme catalyses K(+)(in) + H(+)(in) = K(+)(out) + H(+)(out). Functionally, transport of potassium into the cell. Likely operates as a K(+):H(+) symporter. In Pseudomonas syringae pv. tomato (strain ATCC BAA-871 / DC3000), this protein is Probable potassium transport system protein Kup.